A 244-amino-acid polypeptide reads, in one-letter code: Uridylate kinase (244 aa).

17 to 20 provides a ligand contact to ATP; the sequence is KVSG. The tract at residues 25–30 is involved in allosteric activation by GTP; that stretch reads GDKGFG. Glycine 59 is a UMP binding site. ATP-binding residues include glycine 60 and arginine 64. UMP contacts are provided by residues aspartate 80 and 141 to 148; that span reads VGNPFFTT. Threonine 168, glutamine 169, tyrosine 174, and aspartate 177 together coordinate ATP.

The protein belongs to the UMP kinase family. Homohexamer.

It is found in the cytoplasm. It carries out the reaction UMP + ATP = UDP + ADP. The protein operates within pyrimidine metabolism; CTP biosynthesis via de novo pathway; UDP from UMP (UMPK route): step 1/1. With respect to regulation, allosterically activated by GTP. Inhibited by UTP. In terms of biological role, catalyzes the reversible phosphorylation of UMP to UDP. The protein is Uridylate kinase of Ehrlichia ruminantium (strain Welgevonden).